Consider the following 2108-residue polypeptide: Kinesin-like protein KIF26B (2108 aa).

Disordered regions lie at residues 1 to 124 (MNSV…PGSD) and 263 to 287 (KHGS…PTHQ). The span at 40–50 (WYRKAYEESRA) shows a compositional bias: basic and acidic residues. The span at 58–98 (GAGSALGSSGTPSPGSGTSSPSSFTGSPGPASPGIGTSSPG) shows a compositional bias: low complexity. Positions 99-120 (SLGGSPGFGTGSPGSGSGGGSS) are enriched in gly residues. The Kinesin motor domain maps to 450-801 (KVKVMLRICS…IQIASRVLRM (352 aa)). 546 to 553 (GHAKLGKS) contributes to the ATP binding site. Disordered stretches follow at residues 805-825 (KTKY…GRMR), 876-917 (SDKE…GKSE), 937-1166 (DGSE…ESKK), 1406-1504 (EPEA…PVTD), 1519-1653 (GLAT…SSSK), 1685-1799 (AESL…ASKL), and 1824-1974 (RAGP…WVDG). The segment covering 1004 to 1046 (SHSPVPAAAPAHSPSPASPRSVPGSSSQHSASPLVQSPSLQSS) has biased composition (low complexity). The span at 1424–1461 (RESKENSAKKEMKFEDPWLKREEEVKKETAHPNEEGMM) shows a compositional bias: basic and acidic residues. Residues 1491–1500 (SSSSGEVSAS) show a composition bias toward low complexity. Composition is skewed to polar residues over residues 1521–1537 (ATQS…SSSL) and 1611–1628 (RASP…SPLN). 2 stretches are compositionally biased toward low complexity: residues 1713-1730 (SAGT…AGQS) and 1751-1763 (STTK…TKSL). The segment covering 1781-1795 (PWSTQSLSRNRSSGL) has biased composition (polar residues). Low complexity predominate over residues 1824–1836 (RAGPEAEARGGAL). The residue at position 1855 (Thr1855) is a Phosphothreonine. 2 stretches are compositionally biased toward polar residues: residues 1866 to 1875 (GHGSDNSSVL) and 1907 to 1925 (ATGS…SSSV). Residues 1930–1948 (RSLKTPKKRSNPGSQRRRL) show a composition bias toward basic residues. A compositionally biased stretch (polar residues) spans 1954–1968 (LDTSSPVRKPPNSTG). Ser1958 carries the post-translational modification Phosphoserine.

The protein belongs to the TRAFAC class myosin-kinesin ATPase superfamily. Kinesin family. KIF26 subfamily. Interacts with MYH10. Phosphorylation at Thr-1855 and Ser-1958 by CDKs, mainly CDK2 and CDK5, enhances the interaction with NEDD4, polyubiquitination, and subsequent proteasomal degradation. Phosphorylation occurs upon loss of interaction with microtubules. Post-translationally, polyubiquitinated by NEDD4, resulting in proteasomal degradation.

It is found in the cytoplasm. The protein localises to the cytoskeleton. In terms of biological role, essential for embryonic kidney development. Plays an important role in the compact adhesion between mesenchymal cells adjacent to the ureteric buds, possibly by interacting with MYH10. This could lead to the establishment of the basolateral integrity of the mesenchyme and the polarized expression of ITGA8, which maintains the GDNF expression required for further ureteric bud attraction. Although it seems to lack ATPase activity it is constitutively associated with microtubules. This Homo sapiens (Human) protein is Kinesin-like protein KIF26B (KIF26B).